Here is a 184-residue protein sequence, read N- to C-terminus: ATP synthase subunit b, chloroplastic (184 aa).

A helical transmembrane segment spans residues 27–49 (LATNLINLSVVLGVLIFFGKGVL).

This sequence belongs to the ATPase B chain family. F-type ATPases have 2 components, F(1) - the catalytic core - and F(0) - the membrane proton channel. F(1) has five subunits: alpha(3), beta(3), gamma(1), delta(1), epsilon(1). F(0) has four main subunits: a(1), b(1), b'(1) and c(10-14). The alpha and beta chains form an alternating ring which encloses part of the gamma chain. F(1) is attached to F(0) by a central stalk formed by the gamma and epsilon chains, while a peripheral stalk is formed by the delta, b and b' chains.

It localises to the plastid. The protein localises to the chloroplast thylakoid membrane. F(1)F(0) ATP synthase produces ATP from ADP in the presence of a proton or sodium gradient. F-type ATPases consist of two structural domains, F(1) containing the extramembraneous catalytic core and F(0) containing the membrane proton channel, linked together by a central stalk and a peripheral stalk. During catalysis, ATP synthesis in the catalytic domain of F(1) is coupled via a rotary mechanism of the central stalk subunits to proton translocation. Functionally, component of the F(0) channel, it forms part of the peripheral stalk, linking F(1) to F(0). The sequence is that of ATP synthase subunit b, chloroplastic from Guizotia abyssinica (Niger).